A 272-amino-acid polypeptide reads, in one-letter code: Undecaprenyl-diphosphatase (272 aa).

The next 7 helical transmembrane spans lie at 2–22 (FDIIKAVIIGIVEGLTEFLPI), 43–63 (FISMFEYVIQFGAILAVVLLY), 82–102 (WQLWAKVIIAVLPSAVVGLPL), 110–130 (LHTPIVVATTLIVYGILFIIL), 185–205 (YVATEFSFFLAIPTMVGVLII), 224–244 (VLMTGSIVSFLVAIVAIKWLL), and 252–272 (FKPFGWYRIALGAIVLLVMFI).

It belongs to the UppP family.

The protein localises to the cell membrane. It catalyses the reaction di-trans,octa-cis-undecaprenyl diphosphate + H2O = di-trans,octa-cis-undecaprenyl phosphate + phosphate + H(+). Catalyzes the dephosphorylation of undecaprenyl diphosphate (UPP). Confers resistance to bacitracin. This Lacticaseibacillus casei (strain BL23) (Lactobacillus casei) protein is Undecaprenyl-diphosphatase.